The following is a 262-amino-acid chain: Cutinase 1 (262 aa).

Tyr-61 is a binding site for poly(ethylene terephthalate). Catalysis depends on Ser-131, which acts as the Nucleophile. Residues Met-132 and Trp-156 each coordinate poly(ethylene terephthalate). Active-site charge relay system residues include Asp-177 and His-209. Cys-242 and Cys-260 form a disulfide bridge.

Belongs to the AB hydrolase superfamily.

It localises to the secreted. It is found in the periplasm. It carries out the reaction (ethylene terephthalate)(n) + H2O = (ethylene terephthalate)(n-1) + 4-[(2-hydroxyethoxy)carbonyl]benzoate + H(+). The enzyme catalyses a butanoate ester + H2O = an aliphatic alcohol + butanoate + H(+). It catalyses the reaction an acetyl ester + H2O = an aliphatic alcohol + acetate + H(+). The catalysed reaction is cutin + H2O = cutin monomers.. Catalyzes the hydrolysis of cutin, a polyester that forms the structure of plant cuticle. Shows esterase activity towards p-nitrophenol-linked aliphatic esters (pNP-aliphatic esters). Capable of degrading the plastic poly(ethylene terephthalate) (PET), the most abundant polyester plastic in the world. Capable of degrading the bioplastic poly(lactic acid) (PLLA). The protein is Cutinase 1 of Thermobifida cellulosilytica.